The primary structure comprises 886 residues: DNA double-strand break repair Rad50 ATPase (886 aa).

ATP is bound by residues Arg-13, 33–39 (NGAGKSS), and Gln-128. Coiled coils occupy residues 183 to 360 (EQIK…LLET) and 400 to 433 (KEIT…LKSA). Residues 392–489 (LSKAKEEEKE…RLEKVEKALE (98 aa)) form the Zinc-hook domain. Zn(2+) contacts are provided by Cys-437 and Cys-440. 2 coiled-coil regions span residues 489-518 (EKQE…DAEK) and 545-713 (SSAS…KKVE). 792–797 (FLSGGE) serves as a coordination point for ATP.

It belongs to the SMC family. RAD50 subfamily. As to quaternary structure, homodimer. Forms a heterotetramer composed of two Mre11 subunits and two Rad50 subunits. Zn(2+) serves as cofactor.

In terms of biological role, part of the Rad50/Mre11 complex, which is involved in the early steps of DNA double-strand break (DSB) repair. The complex may facilitate opening of the processed DNA ends to aid in the recruitment of HerA and NurA. Rad50 controls the balance between DNA end bridging and DNA resection via ATP-dependent structural rearrangements of the Rad50/Mre11 complex. The sequence is that of DNA double-strand break repair Rad50 ATPase from Archaeoglobus fulgidus (strain ATCC 49558 / DSM 4304 / JCM 9628 / NBRC 100126 / VC-16).